A 207-amino-acid polypeptide reads, in one-letter code: Large ribosomal subunit protein bL25 (207 aa).

The interval 182-207 (QDLGDESVQEEQAAESAEGESEGSED) is disordered.

It belongs to the bacterial ribosomal protein bL25 family. CTC subfamily. In terms of assembly, part of the 50S ribosomal subunit; part of the 5S rRNA/L5/L18/L25 subcomplex. Contacts the 5S rRNA. Binds to the 5S rRNA independently of L5 and L18.

Functionally, this is one of the proteins that binds to the 5S RNA in the ribosome where it forms part of the central protuberance. The sequence is that of Large ribosomal subunit protein bL25 from Micrococcus luteus (strain ATCC 4698 / DSM 20030 / JCM 1464 / CCM 169 / CCUG 5858 / IAM 1056 / NBRC 3333 / NCIMB 9278 / NCTC 2665 / VKM Ac-2230) (Micrococcus lysodeikticus).